The sequence spans 42 residues: Kappa-actitoxin-Ael2a (42 aa).

Cystine bridges form between Cys4–Cys37, Cys6–Cys30, and Cys20–Cys38.

Belongs to the sea anemone type 3 (BDS) potassium channel toxin family.

The protein resides in the secreted. It localises to the nematocyst. Peptide with both antimicrobial and neurotoxin activities. This toxin acts both on ERG potassium channels and sodium channels. It potently and reversibly inhibits human Kv11.1/KCNH2/ERG1 (IC(50)=34 nM), rat Kv11.1/KCNH2/ERG1 and Kv11.3/KCNH7/ERG3 voltage-gated potassium channels in a similar potency. It acts as a gating-modifier toxin that shifts the voltage-dependence of ERG activation in the positive direction and suppresses its current amplitudes elicited by strong depolarizing pulses. On sodium channels, it blocks Nav1.2/SCN2A (EC(50)=31 nM), Nav1.3/SCN3A, Nav1.4/SCN4A, Nav1.5/SCN5A, Nav1.6/SCN8A, Nav1.8/SCN10A (EC(50)=92 nM). It may act by binding at site 1 or close by, only when the pore is in an open configuration. Shows antibacterial activity against the Gram-negative bacterium S.typhimurium, but not on the bacteria B.subtilis, S.aureus, and P.aeruginosa. In vivo, this toxin does not induce neurotoxic symptoms when injected into mice. The protein is Kappa-actitoxin-Ael2a of Anthopleura elegantissima (Green aggregating anemone).